Reading from the N-terminus, the 564-residue chain is Septation ring formation regulator EzrA (564 aa).

The Extracellular segment spans residues 1-4 (MVLY). The chain crosses the membrane as a helical span at residues 5–23 (IILAIIVIILIAVGVLFYL). Residues 24-564 (RSNKRQIIEK…KHIEEEVIKQ (541 aa)) are Cytoplasmic-facing. Coiled-coil stretches lie at residues 99 to 138 (SFNA…YKDN), 190 to 223 (DGNY…LIRE), 271 to 300 (LISR…LIEH), 350 to 435 (VRQF…RRLL), and 471 to 550 (VKQL…ESVE).

It belongs to the EzrA family.

Its subcellular location is the cell membrane. Negative regulator of FtsZ ring formation; modulates the frequency and position of FtsZ ring formation. Inhibits FtsZ ring formation at polar sites. Interacts either with FtsZ or with one of its binding partners to promote depolymerization. This chain is Septation ring formation regulator EzrA, found in Staphylococcus aureus (strain Mu3 / ATCC 700698).